The sequence spans 89 residues: Small ribosomal subunit protein uS15 (89 aa).

Belongs to the universal ribosomal protein uS15 family. In terms of assembly, part of the 30S ribosomal subunit. Forms a bridge to the 50S subunit in the 70S ribosome, contacting the 23S rRNA.

Functionally, one of the primary rRNA binding proteins, it binds directly to 16S rRNA where it helps nucleate assembly of the platform of the 30S subunit by binding and bridging several RNA helices of the 16S rRNA. Forms an intersubunit bridge (bridge B4) with the 23S rRNA of the 50S subunit in the ribosome. This Staphylococcus aureus (strain JH1) protein is Small ribosomal subunit protein uS15.